The sequence spans 515 residues: Cytochrome P450 1A2 (515 aa).

The O-linked (GlcNAc) serine glycan is linked to Ser-69. Phe-226 is a binding site for substrate. Cys-458 lines the heme pocket.

It belongs to the cytochrome P450 family. In terms of assembly, interacts with PGRMC1; the interaction requires PGRMC1 homodimerization. The cofactor is heme.

Its subcellular location is the endoplasmic reticulum membrane. The protein resides in the microsome membrane. It catalyses the reaction an organic molecule + reduced [NADPH--hemoprotein reductase] + O2 = an alcohol + oxidized [NADPH--hemoprotein reductase] + H2O + H(+). The enzyme catalyses 17beta-estradiol + reduced [NADPH--hemoprotein reductase] + O2 = 2-hydroxy-17beta-estradiol + oxidized [NADPH--hemoprotein reductase] + H2O + H(+). It carries out the reaction 17beta-estradiol + reduced [NADPH--hemoprotein reductase] + O2 = 4-hydroxy-17beta-estradiol + oxidized [NADPH--hemoprotein reductase] + H2O + H(+). The catalysed reaction is estrone + reduced [NADPH--hemoprotein reductase] + O2 = 2-hydroxyestrone + oxidized [NADPH--hemoprotein reductase] + H2O + H(+). It catalyses the reaction estrone + reduced [NADPH--hemoprotein reductase] + O2 = 4-hydroxyestrone + oxidized [NADPH--hemoprotein reductase] + H2O + H(+). The enzyme catalyses cholesterol + reduced [NADPH--hemoprotein reductase] + O2 = 25-hydroxycholesterol + oxidized [NADPH--hemoprotein reductase] + H2O + H(+). It carries out the reaction all-trans-retinol + reduced [NADPH--hemoprotein reductase] + O2 = all-trans-retinal + oxidized [NADPH--hemoprotein reductase] + 2 H2O + H(+). The catalysed reaction is all-trans-retinal + reduced [NADPH--hemoprotein reductase] + O2 = all-trans-retinoate + oxidized [NADPH--hemoprotein reductase] + H2O + 2 H(+). It catalyses the reaction (5Z,8Z,11Z,14Z)-eicosatetraenoate + reduced [NADPH--hemoprotein reductase] + O2 = (14R,15S)-epoxy-(5Z,8Z,11Z)-eicosatrienoate + oxidized [NADPH--hemoprotein reductase] + H2O + H(+). The enzyme catalyses (5Z,8Z,11Z,14Z)-eicosatetraenoate + reduced [NADPH--hemoprotein reductase] + O2 = (14S,15R)-epoxy-(5Z,8Z,11Z)-eicosatrienoate + oxidized [NADPH--hemoprotein reductase] + H2O + H(+). It carries out the reaction (5Z,8Z,11Z,14Z,17Z)-eicosapentaenoate + reduced [NADPH--hemoprotein reductase] + O2 = (17R,18S)-epoxy-(5Z,8Z,11Z,14Z)-eicosatetraenoate + oxidized [NADPH--hemoprotein reductase] + H2O + H(+). The catalysed reaction is (4Z,7Z,10Z,13Z,16Z,19Z)-docosahexaenoate + reduced [NADPH--hemoprotein reductase] + O2 = (19R,20S)-epoxy-(4Z,7Z,10Z,13Z,16Z)-docosapentaenoate + oxidized [NADPH--hemoprotein reductase] + H2O + H(+). It catalyses the reaction (5S)-hydroperoxy-(6E,8Z,11Z,14Z)-eicosatetraenoate = 5-oxo-(6E,8Z,11Z,14Z)-eicosatetraenoate + H2O. The enzyme catalyses (12S)-hydroperoxy-(5Z,8Z,10E,14Z)-eicosatetraenoate = 12-oxo-(5Z,8Z,10E,14Z)-eicosatetraenoate + H2O. It carries out the reaction (15S)-hydroperoxy-(5Z,8Z,11Z,13E)-eicosatetraenoate = 15-oxo-(5Z,8Z,11Z,13E)-eicosatetraenoate + H2O. The catalysed reaction is (13S)-hydroperoxy-(9Z,11E)-octadecadienoate = 13-oxo-(9Z,11E)-octadecadienoate + H2O. It catalyses the reaction (5Z,8Z,11Z,14Z)-eicosatetraenoate + reduced [NADPH--hemoprotein reductase] + O2 = 13-hydroxy-(5Z,8Z,11Z,14Z)-eicosatetraenoate + oxidized [NADPH--hemoprotein reductase] + H2O + H(+). The enzyme catalyses (5Z,8Z,11Z,14Z)-eicosatetraenoate + reduced [NADPH--hemoprotein reductase] + O2 = 19-hydroxy-(5Z,8Z,11Z,14Z)-eicosatetraenoate + oxidized [NADPH--hemoprotein reductase] + H2O + H(+). It carries out the reaction (9Z,12Z)-octadecadienoate + reduced [NADPH--hemoprotein reductase] + O2 = 11-hydroxy-(9Z,12Z)-octadecadienoate + oxidized [NADPH--hemoprotein reductase] + H2O + H(+). The protein operates within cofactor metabolism; retinol metabolism. Its pathway is steroid metabolism; cholesterol metabolism. It functions in the pathway lipid metabolism; arachidonate metabolism. A cytochrome P450 monooxygenase involved in the metabolism of various endogenous substrates, including fatty acids, steroid hormones and vitamins. Mechanistically, uses molecular oxygen inserting one oxygen atom into a substrate, and reducing the second into a water molecule, with two electrons provided by NADPH via cytochrome P450 reductase (NADPH--hemoprotein reductase). Catalyzes the hydroxylation of carbon-hydrogen bonds. Exhibits high catalytic activity for the formation of hydroxyestrogens from estrone (E1) and 17beta-estradiol (E2), namely 2-hydroxy E1 and E2. Metabolizes cholesterol toward 25-hydroxycholesterol, a physiological regulator of cellular cholesterol homeostasis. May act as a major enzyme for all-trans retinoic acid biosynthesis in the liver. Catalyzes two successive oxidative transformation of all-trans retinol to all-trans retinal and then to the active form all-trans retinoic acid. Primarily catalyzes stereoselective epoxidation of the last double bond of polyunsaturated fatty acids (PUFA), displaying a strong preference for the (R,S) stereoisomer. Catalyzes bisallylic hydroxylation and omega-1 hydroxylation of PUFA. May also participate in eicosanoids metabolism by converting hydroperoxide species into oxo metabolites (lipoxygenase-like reaction, NADPH-independent). Plays a role in the oxidative metabolism of xenobiotics. Catalyzes the N-hydroxylation of heterocyclic amines and the O-deethylation of phenacetin. Metabolizes caffeine via N3-demethylation. This chain is Cytochrome P450 1A2 (CYP1A2), found in Cavia porcellus (Guinea pig).